The following is a 400-amino-acid chain: Snake venom metalloproteinase H1 (400 aa).

Residues 1–6 (FPYQGS) form the signal peptide. A propeptide spanning residues 7–176 (SIILESGNVN…KKASQLIVST (170 aa)) is cleaved from the precursor. Residues 180–377 (RYMEIVIVVD…ENPPCILNKP (198 aa)) enclose the Peptidase M12B domain. The Ca(2+) site is built by E183 and D267. 3 cysteine pairs are disulfide-bonded: C291-C372, C331-C356, and C333-C339. Residue H316 coordinates Zn(2+). Residue E317 is part of the active site. Zn(2+)-binding residues include H320 and H326. Residues C372, N375, V387, N390, L392, E394, and D400 each contribute to the Ca(2+) site. The propeptide occupies 378-400 (LRTDTVSTPVSGNELLEAGKDYD).

The protein belongs to the venom metalloproteinase (M12B) family. P-I subfamily. In terms of assembly, monomer. Requires Zn(2+) as cofactor. As to expression, expressed by the venom gland.

The protein resides in the secreted. Snake venom metalloproteinase that impairs hemostasis in the envenomed animal. The protein is Snake venom metalloproteinase H1 of Deinagkistrodon acutus (Hundred-pace snake).